The following is a 164-amino-acid chain: HTH-type transcriptional regulator IscR (164 aa).

An HTH rrf2-type domain is found at arginine 2 to asparagine 131. The segment at residues leucine 28–lysine 51 is a DNA-binding region (H-T-H motif). Cysteine 92, cysteine 98, and cysteine 104 together coordinate [2Fe-2S] cluster.

The cofactor is [2Fe-2S] cluster.

Regulates the transcription of several operons and genes involved in the biogenesis of Fe-S clusters and Fe-S-containing proteins. The sequence is that of HTH-type transcriptional regulator IscR from Salmonella agona (strain SL483).